Reading from the N-terminus, the 98-residue chain is MPRVTRADVAHLARLSRLALTEAELDRFAGQLDVILDAVAKVSSVAGSDVRPTSHPLPLTNVYRDDEVRPSLPVGEVLAAAPAVEDQRFKVPRILEEE.

It belongs to the GatC family. Heterotrimer of A, B and C subunits.

It carries out the reaction L-glutamyl-tRNA(Gln) + L-glutamine + ATP + H2O = L-glutaminyl-tRNA(Gln) + L-glutamate + ADP + phosphate + H(+). It catalyses the reaction L-aspartyl-tRNA(Asn) + L-glutamine + ATP + H2O = L-asparaginyl-tRNA(Asn) + L-glutamate + ADP + phosphate + 2 H(+). Functionally, allows the formation of correctly charged Asn-tRNA(Asn) or Gln-tRNA(Gln) through the transamidation of misacylated Asp-tRNA(Asn) or Glu-tRNA(Gln) in organisms which lack either or both of asparaginyl-tRNA or glutaminyl-tRNA synthetases. The reaction takes place in the presence of glutamine and ATP through an activated phospho-Asp-tRNA(Asn) or phospho-Glu-tRNA(Gln). This is Aspartyl/glutamyl-tRNA(Asn/Gln) amidotransferase subunit C from Acidothermus cellulolyticus (strain ATCC 43068 / DSM 8971 / 11B).